Reading from the N-terminus, the 635-residue chain is Threonine--tRNA ligase (635 aa).

Residues 1-144 are editing domain; that stretch reads MQLLLIHSDY…RTIRLEGAVP (144 aa). Residues 215–514 form a catalytic region; the sequence is PHVELMRRLE…AEEGKVPNLP (300 aa). Residues Cys-307, His-359, and His-483 each coordinate Zn(2+).

It belongs to the class-II aminoacyl-tRNA synthetase family. Homodimer. It depends on Zn(2+) as a cofactor.

Its subcellular location is the cytoplasm. The enzyme catalyses tRNA(Thr) + L-threonine + ATP = L-threonyl-tRNA(Thr) + AMP + diphosphate + H(+). Catalyzes the attachment of threonine to tRNA(Thr) in a two-step reaction: L-threonine is first activated by ATP to form Thr-AMP and then transferred to the acceptor end of tRNA(Thr). Also edits incorrectly charged L-seryl-tRNA(Thr). This Methanococcoides burtonii (strain DSM 6242 / NBRC 107633 / OCM 468 / ACE-M) protein is Threonine--tRNA ligase.